An 89-amino-acid polypeptide reads, in one-letter code: uncharacterized protein (89 aa).

Residues 1-89 enclose the HTH arsR-type domain; the sequence is MEKYEKAAEI…KEIIKLVDEL (89 aa).

This is an uncharacterized protein from Methanocaldococcus jannaschii (strain ATCC 43067 / DSM 2661 / JAL-1 / JCM 10045 / NBRC 100440) (Methanococcus jannaschii).